Reading from the N-terminus, the 488-residue chain is Probable apyrase 5 (488 aa).

Residues 1-26 (MDALKVQILPDNQSSPSSTHMLTKPK) form a disordered region. Residues 1 to 32 (MDALKVQILPDNQSSPSSTHMLTKPKSKKATK) are Cytoplasmic-facing. Polar residues predominate over residues 10 to 21 (PDNQSSPSSTHM). Residues 33–53 (SIAMLIVASLAITLGLLFVFS) form a helical; Signal-anchor for type II membrane protein membrane-spanning segment. Over 54 to 488 (SNSVMFSASF…GKSRKMIGFK (435 aa)) the chain is Extracellular. 73–83 (VIIDAGSSGTR) provides a ligand contact to ATP. Glutamate 196 acts as the Proton acceptor in catalysis. 220–230 (GIVELGGASAQ) is an ATP binding site. The N-linked (GlcNAc...) asparagine glycan is linked to asparagine 251.

Belongs to the GDA1/CD39 NTPase family. Requires Ca(2+) as cofactor. Highly expressed in young rosette leaves but only weakly in roots.

Its subcellular location is the membrane. It catalyses the reaction a ribonucleoside 5'-triphosphate + 2 H2O = a ribonucleoside 5'-phosphate + 2 phosphate + 2 H(+). In terms of biological role, catalyzes the hydrolysis of phosphoanhydride bonds of nucleoside tri- and di-phosphates. The protein is Probable apyrase 5 (APY5) of Arabidopsis thaliana (Mouse-ear cress).